Reading from the N-terminus, the 159-residue chain is SsrA-binding protein (159 aa).

This sequence belongs to the SmpB family.

The protein resides in the cytoplasm. Functionally, required for rescue of stalled ribosomes mediated by trans-translation. Binds to transfer-messenger RNA (tmRNA), required for stable association of tmRNA with ribosomes. tmRNA and SmpB together mimic tRNA shape, replacing the anticodon stem-loop with SmpB. tmRNA is encoded by the ssrA gene; the 2 termini fold to resemble tRNA(Ala) and it encodes a 'tag peptide', a short internal open reading frame. During trans-translation Ala-aminoacylated tmRNA acts like a tRNA, entering the A-site of stalled ribosomes, displacing the stalled mRNA. The ribosome then switches to translate the ORF on the tmRNA; the nascent peptide is terminated with the 'tag peptide' encoded by the tmRNA and targeted for degradation. The ribosome is freed to recommence translation, which seems to be the essential function of trans-translation. The chain is SsrA-binding protein from Saccharophagus degradans (strain 2-40 / ATCC 43961 / DSM 17024).